The chain runs to 177 residues: Tumor necrosis factor ligand superfamily member 18 (177 aa).

At Met1–Trp27 the chain is on the cytoplasmic side. Residues Leu28–Phe48 traverse the membrane as a helical; Signal-anchor for type II membrane protein segment. Positions Ile47 to Leu170 constitute a THD domain. The Extracellular portion of the chain corresponds to Leu49–Ser177. The cysteines at positions 58 and 78 are disulfide-linked. N-linked (GlcNAc...) asparagine glycosylation is found at Asn129 and Asn161.

The protein belongs to the tumor necrosis factor family. Homodimer. Homotrimer. Expressed at high levels in the small intestine, ovary, testis, kidney and endothelial cells.

It is found in the cell membrane. Functionally, cytokine that binds to TNFRSF18/AITR/GITR. Regulates T-cell responses. Can function as costimulator and lower the threshold for T-cell activation and T-cell proliferation. Important for interactions between activated T-lymphocytes and endothelial cells. Mediates activation of NF-kappa-B. Triggers increased phosphorylation of STAT1 and up-regulates expression of VCAM1 and ICAM1. Promotes leukocyte adhesion to endothelial cells. Regulates migration of monocytes from the splenic reservoir to sites of inflammation. This chain is Tumor necrosis factor ligand superfamily member 18, found in Homo sapiens (Human).